The chain runs to 385 residues: Phosphorylated adapter RNA export protein (385 aa).

The segment covering 1 to 18 (MALEAGDMEEGQLSDSDS) has biased composition (acidic residues). Residues 1 to 28 (MALEAGDMEEGQLSDSDSDMTVVPSDRP) form a disordered region. A2 is subject to N-acetylalanine. Positions 2 to 320 (ALEAGDMEEG…KAARKRRTQL (319 aa)) are necessary for interaction with CBP80. 6 positions are modified to phosphoserine: S14, S16, S56, S57, S60, and S63. Residues 71 to 74 (KRKR) carry the Nuclear localization signal motif. Positions 75 to 101 (QKCHNTPPKPEPFPFGPSGQKTALNGG) are disordered. The Nuclear export signal signature appears at 120–129 (VATELGILGM). Positions 164–184 (KDLDEYMHGDKKPGSKEDENG) are enriched in basic and acidic residues. The disordered stretch occupies residues 164-192 (KDLDEYMHGDKKPGSKEDENGQGHLKRKR). The short motif at 189-192 (KRKR) is the Nuclear localization signal element. Residues 219–319 (EKVADEIAFR…KKAARKRRTQ (101 aa)) form a sufficient for poly U RNA-binding region. The necessary for poly U RNA-binding and snRNA export stretch occupies residues 270–278 (GSRRRTPGG). T287 is subject to Phosphothreonine. Positions 335-385 (QEDDDTSRETFASDTNEALASLDEAQEGPGETKLDAEEAIEVDHPQDLDIF) are disordered. A compositionally biased stretch (polar residues) spans 343–352 (ETFASDTNEA). S347 carries the phosphoserine modification. The span at 364-385 (GETKLDAEEAIEVDHPQDLDIF) shows a compositional bias: basic and acidic residues.

Belongs to the PHAX family. As to quaternary structure, found in a U snRNA export complex with PHAX/RNUXA, NCBP1/CBP80, NCBP2/CBP20, RAN, XPO1 and m7G-capped RNA. Part of a precomplex with PHAX/RNUXA, NCBP1/CBP80, NCBP2/CBP20 and m7G-capped RNA. Interacts with NCBP1/CBP80. Found in a complex with snoRNA. Interacts with NCBP2/CBP20. Interacts with DDX39A; this interaction stimulates PHAX RNA binding activity. Post-translationally, phosphorylated in the nucleus. Dephosphorylated in the cytoplasm.

The protein resides in the nucleus. It localises to the nucleoplasm. The protein localises to the cajal body. Its subcellular location is the cytoplasm. In terms of biological role, a phosphoprotein adapter involved in the XPO1-mediated U snRNA export from the nucleus. Bridge components required for U snRNA export, the cap binding complex (CBC)-bound snRNA on the one hand and the GTPase Ran in its active GTP-bound form together with the export receptor XPO1 on the other. Its phosphorylation in the nucleus is required for U snRNA export complex assembly and export, while its dephosphorylation in the cytoplasm causes export complex disassembly. It is recycled back to the nucleus via the importin alpha/beta heterodimeric import receptor. The directionality of nuclear export is thought to be conferred by an asymmetric distribution of the GTP- and GDP-bound forms of Ran between the cytoplasm and nucleus. Its compartmentalized phosphorylation cycle may also contribute to the directionality of export. Binds strongly to m7G-capped U1 and U5 small nuclear RNAs (snRNAs) in a sequence-unspecific manner and phosphorylation-independent manner. Also plays a role in the biogenesis of U3 small nucleolar RNA (snoRNA). Involved in the U3 snoRNA transport from nucleoplasm to Cajal bodies. Binds strongly to m7G-capped U3, U8 and U13 precursor snoRNAs and weakly to trimethylated (TMG)-capped U3, U8 and U13 snoRNAs. Also binds to telomerase RNA. This is Phosphorylated adapter RNA export protein (Phax) from Mus musculus (Mouse).